The chain runs to 400 residues: Casein kinase I homolog hhp2 (400 aa).

The Protein kinase domain maps to tyrosine 12 to leucine 278. Residues isoleucine 18–isoleucine 26 and lysine 41 each bind ATP. Catalysis depends on aspartate 131, which acts as the Proton acceptor. Residues proline 330–asparagine 352 are disordered.

This sequence belongs to the protein kinase superfamily. CK1 Ser/Thr protein kinase family. Casein kinase I subfamily.

It localises to the nucleus. The enzyme catalyses L-seryl-[protein] + ATP = O-phospho-L-seryl-[protein] + ADP + H(+). The catalysed reaction is L-threonyl-[protein] + ATP = O-phospho-L-threonyl-[protein] + ADP + H(+). Its function is as follows. Involved in DNA repair. May regulate the activity of protein(s) involved in double strand break repair caused by gamma rays. In Schizosaccharomyces pombe (strain 972 / ATCC 24843) (Fission yeast), this protein is Casein kinase I homolog hhp2 (hhp2).